Reading from the N-terminus, the 183-residue chain is ATP synthase subunit b, chloroplastic (183 aa).

Residues 27–49 form a helical membrane-spanning segment; the sequence is LATNPINLSVVLGVLIFFGKGVL.

This sequence belongs to the ATPase B chain family. As to quaternary structure, F-type ATPases have 2 components, F(1) - the catalytic core - and F(0) - the membrane proton channel. F(1) has five subunits: alpha(3), beta(3), gamma(1), delta(1), epsilon(1). F(0) has four main subunits: a(1), b(1), b'(1) and c(10-14). The alpha and beta chains form an alternating ring which encloses part of the gamma chain. F(1) is attached to F(0) by a central stalk formed by the gamma and epsilon chains, while a peripheral stalk is formed by the delta, b and b' chains.

Its subcellular location is the plastid. It is found in the chloroplast thylakoid membrane. In terms of biological role, f(1)F(0) ATP synthase produces ATP from ADP in the presence of a proton or sodium gradient. F-type ATPases consist of two structural domains, F(1) containing the extramembraneous catalytic core and F(0) containing the membrane proton channel, linked together by a central stalk and a peripheral stalk. During catalysis, ATP synthesis in the catalytic domain of F(1) is coupled via a rotary mechanism of the central stalk subunits to proton translocation. Functionally, component of the F(0) channel, it forms part of the peripheral stalk, linking F(1) to F(0). The sequence is that of ATP synthase subunit b, chloroplastic from Ranunculus macranthus (Large buttercup).